The sequence spans 272 residues: NH(3)-dependent NAD(+) synthetase (272 aa).

45 to 52 (GISGGQDS) contributes to the ATP binding site. D51 serves as a coordination point for Mg(2+). R138 provides a ligand contact to deamido-NAD(+). T158 provides a ligand contact to ATP. Residue E163 coordinates Mg(2+). 2 residues coordinate deamido-NAD(+): K171 and D178. Positions 187 and 209 each coordinate ATP. 258–259 (HK) contacts deamido-NAD(+).

The protein belongs to the NAD synthetase family. Homodimer.

The enzyme catalyses deamido-NAD(+) + NH4(+) + ATP = AMP + diphosphate + NAD(+) + H(+). Its pathway is cofactor biosynthesis; NAD(+) biosynthesis; NAD(+) from deamido-NAD(+) (ammonia route): step 1/1. Its function is as follows. Catalyzes the ATP-dependent amidation of deamido-NAD to form NAD. Uses ammonia as a nitrogen source. The sequence is that of NH(3)-dependent NAD(+) synthetase from Bacillus mycoides (strain KBAB4) (Bacillus weihenstephanensis).